A 268-amino-acid polypeptide reads, in one-letter code: Tropinone reductase homolog At2g29370 (268 aa).

Residue 22 to 46 participates in NADP(+) binding; the sequence is LVTGGSKGLGKAVVEELAMLGARVH. S155 lines the substrate pocket. Y168 (proton acceptor) is an active-site residue.

It belongs to the short-chain dehydrogenases/reductases (SDR) family. SDR65C subfamily.

The protein is Tropinone reductase homolog At2g29370 of Arabidopsis thaliana (Mouse-ear cress).